Here is a 1392-residue protein sequence, read N- to C-terminus: ATP-dependent helicase/nuclease subunit A (1392 aa).

The UvrD-like helicase ATP-binding domain maps to 4 to 595; that stretch reads FKPTPAQSKA…IVLGENFRSM (592 aa). 25-32 contributes to the ATP binding site; that stretch reads ASAGSGKT. Residues 623–929 enclose the UvrD-like helicase C-terminal domain; the sequence is AHLKYAATYY…NVMTIHGSKG (307 aa).

The protein belongs to the helicase family. AddA subfamily. Heterodimer of AddA and AddB/RexB. Requires Mg(2+) as cofactor.

It catalyses the reaction Couples ATP hydrolysis with the unwinding of duplex DNA by translocating in the 3'-5' direction.. The enzyme catalyses ATP + H2O = ADP + phosphate + H(+). Its function is as follows. The heterodimer acts as both an ATP-dependent DNA helicase and an ATP-dependent, dual-direction single-stranded exonuclease. Recognizes the chi site generating a DNA molecule suitable for the initiation of homologous recombination. The AddA nuclease domain is required for chi fragment generation; this subunit has the helicase and 3' -&gt; 5' nuclease activities. The polypeptide is ATP-dependent helicase/nuclease subunit A (Limosilactobacillus reuteri subsp. reuteri (strain JCM 1112) (Lactobacillus reuteri)).